The following is a 595-amino-acid chain: Cyclin-dependent kinase-like 3 (595 aa).

The 283-residue stretch at 4–286 folds into the Protein kinase domain; it reads YETLGKVGEG…STDLLRHDYF (283 aa). Residues 10–18 and K33 contribute to the ATP site; that span reads VGEGSYGTV. The [NKR]KIAxRE motif lies at 45 to 51; it reads KIATREI. The Proton acceptor role is filled by D125. T158 carries the phosphothreonine modification. Y160 carries the phosphotyrosine modification. Disordered stretches follow at residues 362 to 427, 448 to 513, and 551 to 586; these read VIKA…PHAG, SSNL…NKRK, and RESK…GKNL. Residues 368-386 show a composition bias toward basic and acidic residues; it reads GKGDVPDQKKPEYEGDHRQ. Residues 387–397 are compositionally biased toward polar residues; that stretch reads QGTADDTQPSS. Over residues 448–457 the composition is skewed to low complexity; the sequence is SSNLSHPNSR. Composition is skewed to polar residues over residues 468–491 and 499–509; these read SSQT…QVQT and RTGQNDQISSG. Residues 570 to 585 are compositionally biased toward basic and acidic residues; it reads NQEKQEGGDGDCEGKN.

It belongs to the protein kinase superfamily. CMGC Ser/Thr protein kinase family. CDC2/CDKX subfamily.

It is found in the cytoplasm. The enzyme catalyses L-seryl-[protein] + ATP = O-phospho-L-seryl-[protein] + ADP + H(+). It carries out the reaction L-threonyl-[protein] + ATP = O-phospho-L-threonyl-[protein] + ADP + H(+). The protein is Cyclin-dependent kinase-like 3 of Mus musculus (Mouse).